A 277-amino-acid chain; its full sequence is NH(3)-dependent NAD(+) synthetase (277 aa).

Residue 47–54 coordinates ATP; that stretch reads GISGGQDS. Mg(2+) is bound at residue Asp53. Arg141 is a deamido-NAD(+) binding site. Thr161 contributes to the ATP binding site. Position 166 (Glu166) interacts with Mg(2+). 2 residues coordinate deamido-NAD(+): Lys174 and Asp181. ATP is bound by residues Lys190 and Thr212. A deamido-NAD(+)-binding site is contributed by 261–262; it reads HK.

Belongs to the NAD synthetase family. As to quaternary structure, homodimer.

It carries out the reaction deamido-NAD(+) + NH4(+) + ATP = AMP + diphosphate + NAD(+) + H(+). The protein operates within cofactor biosynthesis; NAD(+) biosynthesis; NAD(+) from deamido-NAD(+) (ammonia route): step 1/1. Its function is as follows. Catalyzes the ATP-dependent amidation of deamido-NAD to form NAD. Uses ammonia as a nitrogen source. The sequence is that of NH(3)-dependent NAD(+) synthetase from Lactobacillus gasseri (strain ATCC 33323 / DSM 20243 / BCRC 14619 / CIP 102991 / JCM 1131 / KCTC 3163 / NCIMB 11718 / NCTC 13722 / AM63).